Consider the following 91-residue polypeptide: DNA-directed RNA polymerase subunit omega (91 aa).

This sequence belongs to the RNA polymerase subunit omega family. In terms of assembly, the RNAP catalytic core consists of 2 alpha, 1 beta, 1 beta' and 1 omega subunit. When a sigma factor is associated with the core the holoenzyme is formed, which can initiate transcription.

It catalyses the reaction RNA(n) + a ribonucleoside 5'-triphosphate = RNA(n+1) + diphosphate. Promotes RNA polymerase assembly. Latches the N- and C-terminal regions of the beta' subunit thereby facilitating its interaction with the beta and alpha subunits. This is DNA-directed RNA polymerase subunit omega from Proteus mirabilis (strain HI4320).